We begin with the raw amino-acid sequence, 360 residues long: DNA polymerase IV (360 aa).

One can recognise a UmuC domain in the interval 6–187 (IIHVDMDAFY…LKIGDLHGVG (182 aa)). Residues aspartate 10 and aspartate 105 each coordinate Mg(2+). Residue glutamate 106 is part of the active site.

It belongs to the DNA polymerase type-Y family. Monomer. Mg(2+) is required as a cofactor.

It localises to the cytoplasm. It catalyses the reaction DNA(n) + a 2'-deoxyribonucleoside 5'-triphosphate = DNA(n+1) + diphosphate. Poorly processive, error-prone DNA polymerase involved in untargeted mutagenesis. Copies undamaged DNA at stalled replication forks, which arise in vivo from mismatched or misaligned primer ends. These misaligned primers can be extended by PolIV. Exhibits no 3'-5' exonuclease (proofreading) activity. May be involved in translesional synthesis, in conjunction with the beta clamp from PolIII. This chain is DNA polymerase IV, found in Exiguobacterium sibiricum (strain DSM 17290 / CCUG 55495 / CIP 109462 / JCM 13490 / 255-15).